The chain runs to 652 residues: Bifunctional protein ThiO/ThiG (652 aa).

The segment at 1–366 is thiO; it reads MTRDIVIIGG…HYSRFQKQAS (366 aa). Residues 5–19 and 44–46 each bind FAD; these read IVIIGGGVIGLAIAV and AGM. Residue Glu52 participates in glycine binding. Val173 serves as a coordination point for FAD. Arg301 and Arg327 together coordinate glycine. An FAD-binding site is contributed by 325–331; the sequence is HYRNGIL. A thiG region spans residues 393–652; that stretch reads SLIIAGKSFH…ASSPVTGTIS (260 aa). Lys494 (schiff-base intermediate with DXP) is an active-site residue. 1-deoxy-D-xylulose 5-phosphate contacts are provided by residues Gly555, 581-582, and 603-604; these read AG and NS.

It in the N-terminal section; belongs to the DAO family. ThiO subfamily. In the C-terminal section; belongs to the ThiG family. As to quaternary structure, interacts with ThiH and ThiS. It depends on FAD as a cofactor.

It is found in the cytoplasm. It carries out the reaction glycine + O2 + H2O = glyoxylate + H2O2 + NH4(+). The catalysed reaction is [ThiS sulfur-carrier protein]-C-terminal-Gly-aminoethanethioate + 2-iminoacetate + 1-deoxy-D-xylulose 5-phosphate = [ThiS sulfur-carrier protein]-C-terminal Gly-Gly + 2-[(2R,5Z)-2-carboxy-4-methylthiazol-5(2H)-ylidene]ethyl phosphate + 2 H2O + H(+). It participates in cofactor biosynthesis; thiamine diphosphate biosynthesis. Its function is as follows. Catalyzes the FAD-dependent oxidative deamination of glycine. Is essential for thiamine biosynthesis since the oxidation of glycine catalyzed by ThiO generates the glycine imine intermediate (dehydroglycine) required for the biosynthesis of the thiazole ring of thiamine pyrophosphate. In terms of biological role, catalyzes the rearrangement of 1-deoxy-D-xylulose 5-phosphate (DXP) to produce the thiazole phosphate moiety of thiamine. Sulfur is provided by the thiocarboxylate moiety of the carrier protein ThiS. In vitro, sulfur can be provided by H(2)S. This Trichormus variabilis (strain ATCC 29413 / PCC 7937) (Anabaena variabilis) protein is Bifunctional protein ThiO/ThiG (thiO/thiG).